The primary structure comprises 327 residues: Glycerol-3-phosphate dehydrogenase [NAD(P)+] (327 aa).

NADPH-binding residues include F13, R34, and K107. Positions 107 and 135 each coordinate sn-glycerol 3-phosphate. Position 139 (A139) interacts with NADPH. Sn-glycerol 3-phosphate contacts are provided by K190, D243, S253, R254, and N255. K190 acts as the Proton acceptor in catalysis. Residue R254 participates in NADPH binding. 2 residues coordinate NADPH: V276 and E277.

Belongs to the NAD-dependent glycerol-3-phosphate dehydrogenase family.

The protein localises to the cytoplasm. The enzyme catalyses sn-glycerol 3-phosphate + NAD(+) = dihydroxyacetone phosphate + NADH + H(+). The catalysed reaction is sn-glycerol 3-phosphate + NADP(+) = dihydroxyacetone phosphate + NADPH + H(+). It functions in the pathway membrane lipid metabolism; glycerophospholipid metabolism. In terms of biological role, catalyzes the reduction of the glycolytic intermediate dihydroxyacetone phosphate (DHAP) to sn-glycerol 3-phosphate (G3P), the key precursor for phospholipid synthesis. The polypeptide is Glycerol-3-phosphate dehydrogenase [NAD(P)+] (Rhizobium etli (strain CIAT 652)).